A 398-amino-acid polypeptide reads, in one-letter code: MNTPTHTHPHPFGSTATIRCERAAAELRTGRPVLLIDAHTRRHAVMALDSMTAQSFTTFANAVGNTHYLFLTPARSNVLGLEAPQGARIPLATLSYDSLVKLAYLRQPTHPTTWVPGDIMDAAATEITRLALLLPAIVAAPLTHHTEHAFADCQTLDLTDLDTAAAGASTTEYELVTRTPVPLRDLGMSEFIVFRGGIAQRDQVAILIGQPDLSSAVPVRVHSSCLTGDLFGSLKCDCGDQLRHGLATLKALGGGVLLYLDQEGRGNGIAAKIRAYGYQHVGLDTIDADAQLGFGPDERRYTGAVMMLRALGITRIQLLSNNPTKVERLRAAGIIVEQRIPVIGQITEQNEYYLRTKVSRAGHDLDIDALIMTSQRPQDPSETVDGETVKSIPKTGHA.

A unknown region spans residues 1–172 (MNTPTHTHPH…TAAAGASTTE (172 aa)). Positions 173 to 398 (YELVTRTPVP…VKSIPKTGHA (226 aa)) are GTP cyclohydrolase II. A GTP-binding site is contributed by 220–224 (RVHSS). Cys225, Cys236, and Cys238 together coordinate Zn(2+). Residues Gln241, 263-265 (EGR), and Thr285 each bind GTP. Asp297 serves as the catalytic Proton acceptor. Arg299 acts as the Nucleophile in catalysis. The GTP site is built by Ser320 and Lys325. A disordered region spans residues 375–398 (QRPQDPSETVDGETVKSIPKTGHA).

This sequence in the C-terminal section; belongs to the GTP cyclohydrolase II family. It depends on Zn(2+) as a cofactor.

It carries out the reaction GTP + 4 H2O = 2,5-diamino-6-hydroxy-4-(5-phosphoribosylamino)-pyrimidine + formate + 2 phosphate + 3 H(+). Its pathway is cofactor biosynthesis; riboflavin biosynthesis; 5-amino-6-(D-ribitylamino)uracil from GTP: step 1/4. Functionally, catalyzes the conversion of GTP to 2,5-diamino-6-ribosylamino-4(3H)-pyrimidinone 5'-phosphate (DARP), formate and pyrophosphate. This Xylella fastidiosa (strain 9a5c) protein is GTP cyclohydrolase-2 (ribA).